A 117-amino-acid polypeptide reads, in one-letter code: Minor capsid protein p17 (117 aa).

The N-linked (GlcNAc...) asparagine; by host glycan is linked to asparagine 12. A helical transmembrane segment spans residues 39-59; sequence AILLGILILLVIILIIVAIVY. N-linked (GlcNAc...) asparagine; by host glycans are attached at residues asparagine 61 and asparagine 97.

Belongs to the asfivirus minor capsid protein p17 family. Interacts with the minor capsid protein M1249L and with the hexon capsid protein p72 capsomers; these interactions form a rigid zipper structure that stabilizes the capsomers. Interacts with host STING1.

Its subcellular location is the virion membrane. The protein localises to the host endoplasmic reticulum membrane. It is found in the host Golgi apparatus membrane. Functionally, together with the penton and the other minor capsid proteins (M1249L, p49), forms a complicated network immediately below the outer capsid shell, stabilizing the whole capsid. Three copies of p17 encircle each p72 capsomer in the inner capsid shell, anchoring p72 capsomers on the inner membrane. Required for the assembly of the capsid and icosahedral morphogenesis. Additionally, inhibits the host cGAS-STING pathway through its interaction with STING1 and subsequent interference of the recruitment of downstream components TBK1 and IKBKE. This African swine fever virus (strain Badajoz 1971 Vero-adapted) (Ba71V) protein is Minor capsid protein p17.